Here is a 104-residue protein sequence, read N- to C-terminus: Circadian clock oscillator protein KaiB (104 aa).

It belongs to the KaiB family. The KaiABC complex composition changes during the circadian cycle to control KaiC phosphorylation. Complexes KaiC(6), KaiA(2-4):KaiC(6), KaiB(6):KaiC(6) and KaiC(6):KaiB(6):KaiA(12) are among the most important forms, many form cooperatively. Undergoes a major conformational rearrangment; in the free state forms homotetramers as a dimer of dimers. When bound to the CI domain of KaiC switches to a monomeric thioredoxin-fold (KaiB(fs)). KaiB(fs) binds CikA, leading it to dephosphorylate phospho-RpaA.

Its function is as follows. Key component of the KaiABC oscillator complex, which constitutes the main circadian regulator in cyanobacteria. Complex composition changes during the circadian cycle to control KaiC phosphorylation. KaiA stimulates KaiC autophosphorylation, while KaiB sequesters KaiA, leading to KaiC autodephosphorylation. Phospho-Ser-431 KaiC accumulation triggers binding of KaiB to form the KaiB(6):KaiC(6) complex, leading to changes in output regulators CikA and SasA. KaiB switches to a thioredoxin-like fold (KaiB(fs)) when bound to KaiC. KaiB(6):KaiC(6) formation exposes a site for KaiA binding that sequesters KaiA from KaiC, making the KaiC(6):KaiB(6):KaiA(12) complex that results in KaiC autodephosphorylation. A metamorphic protein which reversibly switches between an inactive tetrameric fold and a rare, thioredoxin-like monomeric fold (KaiB(fs)). KaiB(fs) binds phospho-KaiC, KaiA and CikA. KaiA and CikA compete for binding to KaiB(fs), and KaiB(fs) and SasA compete for binding to KaiC, thus the clock oscillator and output signal pathway are tightly coupled. In Picosynechococcus sp. (strain ATCC 27264 / PCC 7002 / PR-6) (Agmenellum quadruplicatum), this protein is Circadian clock oscillator protein KaiB.